The primary structure comprises 101 residues: Large ribosomal subunit protein uL24 (101 aa).

This sequence belongs to the universal ribosomal protein uL24 family. In terms of assembly, part of the 50S ribosomal subunit.

Functionally, one of two assembly initiator proteins, it binds directly to the 5'-end of the 23S rRNA, where it nucleates assembly of the 50S subunit. Its function is as follows. One of the proteins that surrounds the polypeptide exit tunnel on the outside of the subunit. The sequence is that of Large ribosomal subunit protein uL24 from Streptococcus pneumoniae (strain ATCC 700669 / Spain 23F-1).